Reading from the N-terminus, the 387-residue chain is Cysteine desulfurase (387 aa).

Pyridoxal 5'-phosphate contacts are provided by residues 72–73 (GT), N152, Q180, and 200–202 (SAH). At K203 the chain carries N6-(pyridoxal phosphate)lysine. T238 provides a ligand contact to pyridoxal 5'-phosphate. Catalysis depends on C323, which acts as the Cysteine persulfide intermediate. C323 serves as a coordination point for [2Fe-2S] cluster.

This sequence belongs to the class-V pyridoxal-phosphate-dependent aminotransferase family. NifS/IscS subfamily. As to quaternary structure, homodimer. Requires pyridoxal 5'-phosphate as cofactor.

The catalysed reaction is (sulfur carrier)-H + L-cysteine = (sulfur carrier)-SH + L-alanine. Catalyzes the removal of elemental sulfur atoms from cysteine to produce alanine. Seems to participate in the biosynthesis of the nitrogenase metalloclusters by providing the inorganic sulfur required for the Fe-S core formation. This Cereibacter sphaeroides (Rhodobacter sphaeroides) protein is Cysteine desulfurase.